Consider the following 508-residue polypeptide: O-acetyltransferase pigM (508 aa).

A disordered region spans residues 166-188 (TPAPDERGKISPSLEDAAGSPRT).

Its pathway is secondary metabolite biosynthesis. Functionally, O-acetyltransferase; part of the gene cluster that mediates the biosynthesis of azaphilone pigments (MonAzPs), a complex mixture of compounds with a common azaphilone skeleton very widely used as food colorants. PigM and pigO are involved in the elimination of the omega-1 alcohol with pigM acting as an O-acetyltransferase that synthesizes the O-11 acetyl intermediate whereas pigO eliminates acetic acid to yield an intermediate with a C10(11) double bond. The first step of the pathway is performed by the nrPKS pigA that forms the hexaketide precursor from successive condensations of five malonyl-CoA units, with a simple acetyl-CoA starter unit. The role of esterase pigG is not clear, but it may play at most a supplementary role in the formation of the benzaldehyde produced by the pigA nrPKS. This very reactive benzaldehyde is intercepted by the pigC ketoreductase that to provide the first stable enzyme-free MonAzPs intermediate, 6-(4-hydroxy-2-oxopentyl)-3-methyl-2,4-dioxocyclohexane carbaldehyde, also known as M7PKS-1. The FAD-dependent monooxygenase pigN hydroxylates M7PKS-1 at C-4, which triggers the formation of the pyran ring. PigJ, pigK and pigD are involved in the acetylation of the pyran ring. PigJ and pigK form the two subunits of a dedicated fungal FAS that produces the side chain fatty acyl moiety of MonAzPs and pigD transfers the fatty acyl chain to the C-4 alcohol. PigM and pigO are involved in the elimination of the omega-1 alcohol. PigM acts as an O-acetyltransferase that synthesizes the putative O-11 acetyl intermediate whereas pigO eliminates acetic acid to yield an intermediate with a C10(11) double bond. The dehydration of the C-11 alcohol followed by the reduction of the C6(7) double bond by the NAD(P)H-dependent oxidoreductase pigE increases the electrophilicity of the C-5 ketone of the resulting acyl benzopyran. This in turn sets up the C-5 ketone for an intramolecular Knoevenagel aldol condensation with the C-20 enol of the side chain. This condensation affords the characteristic linear tricyclic carbon skeletons of the yellow pigments that serve as the common precursors for the classical yellow pigments monascin and ankaflavin, orange pigments rubopunctatin and monascorubrin, and red pigments ribropunctamine and monascorubramine. The FAD-dependent oxidoreductase pigF is especially invoved in the biosynthesis of orange and red pigments via desaturation of C6(7). This is O-acetyltransferase pigM from Monascus ruber (Mold).